Consider the following 100-residue polypeptide: Probable steroid-binding protein 3 (100 aa).

Position 1 is an N-acetylmethionine (Met-1). Residues 1 to 82 enclose the Cytochrome b5 heme-binding domain; it reads MEFTAEQLSQ…LTEKEINTLN (82 aa). The interval 1–82 is sterol-binding; the sequence is MEFTAEQLSQ…LTEKEINTLN (82 aa).

The protein belongs to the cytochrome b5 family. MAPR subfamily.

It localises to the nucleus. The sequence is that of Probable steroid-binding protein 3 (MP3) from Arabidopsis thaliana (Mouse-ear cress).